A 486-amino-acid polypeptide reads, in one-letter code: Cobyric acid synthase (486 aa).

Residues 250 to 438 (AFRIVVPVPP…LHGMFDTPSA (189 aa)) form the GATase cobBQ-type domain. Residue Cys-331 is the Nucleophile of the active site. His-430 is a catalytic residue.

It belongs to the CobB/CobQ family. CobQ subfamily.

Its pathway is cofactor biosynthesis; adenosylcobalamin biosynthesis. Functionally, catalyzes amidations at positions B, D, E, and G on adenosylcobyrinic A,C-diamide. NH(2) groups are provided by glutamine, and one molecule of ATP is hydrogenolyzed for each amidation. In Herminiimonas arsenicoxydans, this protein is Cobyric acid synthase.